Consider the following 378-residue polypeptide: Ferrochelatase (378 aa).

Positions 214 and 295 each coordinate Fe cation.

The protein belongs to the ferrochelatase family.

Its subcellular location is the cytoplasm. The enzyme catalyses heme b + 2 H(+) = protoporphyrin IX + Fe(2+). It functions in the pathway porphyrin-containing compound metabolism; protoheme biosynthesis; protoheme from protoporphyrin-IX: step 1/1. Catalyzes the ferrous insertion into protoporphyrin IX. This Hydrogenovibrio crunogenus (strain DSM 25203 / XCL-2) (Thiomicrospira crunogena) protein is Ferrochelatase.